A 1301-amino-acid chain; its full sequence is Dentin sialophosphoprotein (1301 aa).

Residues 1–15 form the signal peptide; that stretch reads MKIITYFCIWAVAWA. N-linked (GlcNAc...) asparagine glycans are attached at residues Asn-41 and Asn-49. Residues 55-89 form a disordered region; sequence KESGVLVHEGDRGRQENTQDGHKGEGNGSKWAEVG. Residues 62-79 show a composition bias toward basic and acidic residues; sequence HEGDRGRQENTQDGHKGE. N-linked (GlcNAc...) asparagine glycans are attached at residues Asn-81, Asn-130, Asn-150, Asn-190, Asn-191, Asn-209, and Asn-222. Over residues 146 to 165 the composition is skewed to polar residues; sequence AGATNRSNTNGNTDKNTQNG. The disordered stretch occupies residues 146 to 171; sequence AGATNRSNTNGNTDKNTQNGDVGDAG. Residues 202 to 1301 are disordered; it reads NSCRNEGNTS…SDSNHSTSDD (1100 aa). Polar residues predominate over residues 203 to 221; the sequence is SCRNEGNTSEITPQINSKR. Residues 251-267 are compositionally biased toward acidic residues; that stretch reads ADEDEDEGSGDDEDEEA. Ser-259 carries the phosphoserine; by CK1 modification. Positions 271–280 are enriched in polar residues; it reads KDSSNNSKGQ. A glycan (N-linked (GlcNAc...) asparagine) is linked at Asn-275. Basic and acidic residues-rich tracts occupy residues 281–293 and 300–327; these read EGQD…DHDS and DSKE…KSEE. Ser-301 is modified (phosphoserine). Asn-336 is a glycosylation site (N-linked (GlcNAc...) asparagine). The segment covering 340–377 has biased composition (basic and acidic residues); sequence RIEDTQKLNHRESKRVENRITKESETHAVGKSQDKGIE. Residue Asn-387 is glycosylated (N-linked (GlcNAc...) asparagine). Over residues 388–404 the composition is skewed to basic and acidic residues; that stretch reads ITKEVGKGNEGKEDKGQ. Low complexity-rich tracts occupy residues 439-452 and 462-487; these read SNTG…GYDS and GDDP…NSSS. Positions 488–490 match the Cell attachment site motif; it reads RGD. Positions 488-506 are enriched in polar residues; that stretch reads RGDASYNSDESKDNGNGSD. The span at 518 to 534 shows a compositional bias: low complexity; it reads TSDTNNSDSNGNGNNGN. The span at 536–549 shows a compositional bias: basic and acidic residues; the sequence is DNDKSDSGKGKSDS. Residues 555–564 show a composition bias toward low complexity; sequence SDSSNSSDSS. Over residues 581 to 595 the composition is skewed to acidic residues; sequence DSSDSDSSDSSDSDS. Residues 596-619 are compositionally biased toward low complexity; it reads SDSSNSSDSSDSSDSSDSSDSSDS. The segment covering 620–642 has biased composition (basic and acidic residues); the sequence is SDSKSDSSKSESDSSDSDSKSDS. Low complexity-rich tracts occupy residues 643–705, 715–1264, 1272–1284, and 1292–1301; these read SDSN…SDSS, SSDS…STSD, QSKS…NGSD, and SDSNHSTSDD.

As to quaternary structure, interacts with FBLN7. In terms of processing, DSP is glycosylated. As to expression, expressed in teeth. DPP is synthesized by odontoblast and transiently expressed by pre-ameloblasts.

Its subcellular location is the secreted. It localises to the extracellular space. The protein resides in the extracellular matrix. Its function is as follows. DSP may be an important factor in dentinogenesis. DPP may bind high amount of calcium and facilitate initial mineralization of dentin matrix collagen as well as regulate the size and shape of the crystals. The polypeptide is Dentin sialophosphoprotein (DSPP) (Homo sapiens (Human)).